The following is a 398-amino-acid chain: CCA-adding enzyme (398 aa).

2 residues coordinate ATP: Gly-32 and Arg-35. Positions 32 and 35 each coordinate CTP. Residues Asp-45 and Asp-47 each contribute to the Mg(2+) site. ATP contacts are provided by Arg-116, Asp-159, Arg-162, Arg-165, and Arg-168. CTP is bound by residues Arg-116, Asp-159, Arg-162, Arg-165, and Arg-168.

It belongs to the tRNA nucleotidyltransferase/poly(A) polymerase family. Bacterial CCA-adding enzyme type 3 subfamily. As to quaternary structure, homodimer. It depends on Mg(2+) as a cofactor.

The catalysed reaction is a tRNA precursor + 2 CTP + ATP = a tRNA with a 3' CCA end + 3 diphosphate. It catalyses the reaction a tRNA with a 3' CCA end + 2 CTP + ATP = a tRNA with a 3' CCACCA end + 3 diphosphate. Catalyzes the addition and repair of the essential 3'-terminal CCA sequence in tRNAs without using a nucleic acid template. Adds these three nucleotides in the order of C, C, and A to the tRNA nucleotide-73, using CTP and ATP as substrates and producing inorganic pyrophosphate. tRNA 3'-terminal CCA addition is required both for tRNA processing and repair. Also involved in tRNA surveillance by mediating tandem CCA addition to generate a CCACCA at the 3' terminus of unstable tRNAs. While stable tRNAs receive only 3'-terminal CCA, unstable tRNAs are marked with CCACCA and rapidly degraded. The chain is CCA-adding enzyme from Lactobacillus johnsonii (strain CNCM I-12250 / La1 / NCC 533).